A 601-amino-acid chain; its full sequence is MTASAWGLLALFLSVLGLLAWPLGRGLAAVCDGRLPGWMHRAEAPLYRLAGVRPEAGMHWRHYALALLAFNALGVFAVYALQRLQGVLPLNPQGLPAVAGDSAFNTAVSFVSNTNWQGYAGESTMGYLVQMLGLSVQNFLSAATGIAVAFALARGFAARGGDGAGHVGNFWADIVRITAWVLVPLSFVLAVFLAGQGVIQNFTAYQDVATVEATVYQDPQSDAQGQPLKDASGNPLTREVRTRTQTLPMGPVASQEAIKMLGTNGGGFFNANSAHPYENPTPLTNLAQMLAIFLVPAALCFAFGRVVGDWRQGVAILAAMTLMFVVAVVAVTAAEQAGNPALSALGADPVASALQAGGNMEGKEVRFGISASALFAAVTTAASCGAVNAMHDSFTPLGGMVPMVLMQLGEVVFGGAGSGLYGMLVFAILAVFIAGLMIGRTPEYLGKKIEVREMKLTSVAILVTPLLVLVGTAVAVLAPAGQAGIANPGAHGFSEVLYALTSAANNNGSAFAGLSANTPFYNVLLALAMWFGRFGVIVPVLAIAGSLAAKKRLPPGPGTMPTHGPLFVALLVFTVLLVGLLNYVPSLALGPVVEHLVLQAR.

The next 12 membrane-spanning stretches (helical) occupy residues 3–23 (ASAWGLLALFLSVLGLLAWPL), 62–82 (HYALALLAFNALGVFAVYALQ), 132–152 (LGLSVQNFLSAATGIAVAFAL), 179–199 (AWVLVPLSFVLAVFLAGQGVI), 283–303 (LTNLAQMLAIFLVPAALCFAF), 314–334 (VAILAAMTLMFVVAVVAVTAA), 367–387 (FGISASALFAAVTTAASCGAV), 397–417 (LGGMVPMVLMQLGEVVFGGAG), 419–439 (GLYGMLVFAILAVFIAGLMIG), 459–479 (VAILVTPLLVLVGTAVAVLAP), 523–543 (VLLALAMWFGRFGVIVPVLAI), and 564–584 (GPLFVALLVFTVLLVGLLNYV).

The protein belongs to the KdpA family. In terms of assembly, the system is composed of three essential subunits: KdpA, KdpB and KdpC.

The protein resides in the cell inner membrane. Part of the high-affinity ATP-driven potassium transport (or Kdp) system, which catalyzes the hydrolysis of ATP coupled with the electrogenic transport of potassium into the cytoplasm. This subunit binds the periplasmic potassium ions and delivers the ions to the membrane domain of KdpB through an intramembrane tunnel. This is Potassium-transporting ATPase potassium-binding subunit from Paracidovorax citrulli (strain AAC00-1) (Acidovorax citrulli).